A 255-amino-acid chain; its full sequence is F-box/SPRY domain-containing protein 1 (255 aa).

The region spanning 3 to 51 is the F-box domain; that stretch reads DRVAALCNYNVLEVVFSYLDLNDLGRCSQVCKSWFHFLNDENSDVWRFH. Residues 61–253 form the B30.2/SPRY domain; the sequence is TKSELLSPVP…VSMVYCGTPL (193 aa).

It belongs to the FBXO45/Fsn family. In terms of assembly, component of an E3 ubiquitin ligase complex composed of hiw and Fsn.

It is found in the synapse. It participates in protein modification; protein ubiquitination. In terms of biological role, required in the presynaptic motoneuron to down-regulate the levels of wnd and restrain synaptic terminal growth at the neuromuscular junction (NMJ). The protein is F-box/SPRY domain-containing protein 1 of Drosophila persimilis (Fruit fly).